We begin with the raw amino-acid sequence, 682 residues long: 1,4-alpha-glucan-branching enzyme (682 aa).

(1,4-alpha-D-glucosyl)n is bound by residues W88 and K124. D342 acts as the Nucleophile in catalysis. The Proton donor role is filled by E397.

It belongs to the glycosyl hydrolase 13 family. GlgB subfamily.

The protein resides in the cytoplasm. It catalyses the reaction Transfers a segment of a (1-&gt;4)-alpha-D-glucan chain to a primary hydroxy group in a similar glucan chain.. It participates in glycan biosynthesis; glycogen biosynthesis. In terms of biological role, glycogen-branching enzyme participates in the glycogen biosynthetic process along with glycogenin and glycogen synthase. Generates alpha-1,6-glucosidic branches from alpha-1,4-linked glucose chains, to increase solubility of the glycogen polymer. The polypeptide is 1,4-alpha-glucan-branching enzyme (GLC3) (Cryptococcus neoformans var. neoformans serotype D (strain B-3501A) (Filobasidiella neoformans)).